An 86-amino-acid chain; its full sequence is Small ribosomal subunit protein bS20 (86 aa).

Residues methionine 1–threonine 26 form a disordered region.

The protein belongs to the bacterial ribosomal protein bS20 family.

Binds directly to 16S ribosomal RNA. This chain is Small ribosomal subunit protein bS20, found in Psychromonas ingrahamii (strain DSM 17664 / CCUG 51855 / 37).